A 215-amino-acid chain; its full sequence is HTH-type transcriptional repressor FabR (215 aa).

The HTH tetR-type domain occupies 10-70; it reads KTRRSLVEAA…TMVDESGLML (61 aa). The segment at residues 33 to 52 is a DNA-binding region (H-T-H motif); the sequence is SLREVAREAVIAPTSFYRHF.

Homodimer.

It is found in the cytoplasm. Its function is as follows. Represses the transcription of fabB, involved in unsaturated fatty acid (UFA) biosynthesis. By controlling UFA production, FabR directly influences the physical properties of the membrane bilayer. In Escherichia coli (strain K12 / MC4100 / BW2952), this protein is HTH-type transcriptional repressor FabR.